An 861-amino-acid polypeptide reads, in one-letter code: DNA mismatch repair protein MutS (861 aa).

618 to 625 (GPNMGGKS) contacts ATP.

The protein belongs to the DNA mismatch repair MutS family.

Functionally, this protein is involved in the repair of mismatches in DNA. It is possible that it carries out the mismatch recognition step. This protein has a weak ATPase activity. The polypeptide is DNA mismatch repair protein MutS (Shewanella sp. (strain MR-7)).